The sequence spans 287 residues: Inorganic pyrophosphatase (287 aa).

A diphosphate-binding site is contributed by Arg-80. Mg(2+) is bound by residues Asp-117, Asp-122, and Asp-154.

Belongs to the PPase family. Mg(2+) is required as a cofactor.

The protein localises to the cytoplasm. It carries out the reaction diphosphate + H2O = 2 phosphate + H(+). The polypeptide is Inorganic pyrophosphatase (IPP1) (Yarrowia lipolytica (strain CLIB 122 / E 150) (Yeast)).